We begin with the raw amino-acid sequence, 392 residues long: Phosphoglycerate kinase (392 aa).

Substrate-binding positions include aspartate 21–asparagine 23, arginine 36, histidine 59–arginine 62, arginine 114, and arginine 147. ATP is bound by residues lysine 198, glutamate 320, and glycine 346–threonine 349.

Belongs to the phosphoglycerate kinase family. As to quaternary structure, monomer.

Its subcellular location is the cytoplasm. It carries out the reaction (2R)-3-phosphoglycerate + ATP = (2R)-3-phospho-glyceroyl phosphate + ADP. It participates in carbohydrate degradation; glycolysis; pyruvate from D-glyceraldehyde 3-phosphate: step 2/5. This chain is Phosphoglycerate kinase, found in Neisseria meningitidis serogroup A / serotype 4A (strain DSM 15465 / Z2491).